A 213-amino-acid polypeptide reads, in one-letter code: Ribosomal RNA large subunit methyltransferase E (213 aa).

5 residues coordinate S-adenosyl-L-methionine: Gly68, Trp70, Asp88, Asp104, and Asp127. Lys167 serves as the catalytic Proton acceptor.

It belongs to the class I-like SAM-binding methyltransferase superfamily. RNA methyltransferase RlmE family.

The protein localises to the cytoplasm. It catalyses the reaction uridine(2552) in 23S rRNA + S-adenosyl-L-methionine = 2'-O-methyluridine(2552) in 23S rRNA + S-adenosyl-L-homocysteine + H(+). Specifically methylates the uridine in position 2552 of 23S rRNA at the 2'-O position of the ribose in the fully assembled 50S ribosomal subunit. This is Ribosomal RNA large subunit methyltransferase E from Neorickettsia sennetsu (strain ATCC VR-367 / Miyayama) (Ehrlichia sennetsu).